A 453-amino-acid chain; its full sequence is Mogroside IIIx synthase (453 aa).

His21 serves as the catalytic Proton acceptor. Asp122 functions as the Charge relay in the catalytic mechanism. UDP-alpha-D-glucose-binding residues include Ser273, Gln336, Trp354, Asn355, Ser356, Glu359, Asp375, and Gln376.

It belongs to the UDP-glycosyltransferase family. As to expression, highly expressed in mature fruits.

The catalysed reaction is mogroside IIE + UDP-alpha-D-glucose = mogroside IIIX + UDP + H(+). It carries out the reaction mogroside III + UDP-alpha-D-glucose = mogroside IV + UDP + H(+). It catalyses the reaction mogroside III + UDP-alpha-D-glucose = siamenoside I + UDP + H(+). The enzyme catalyses mogroside IV + UDP-alpha-D-glucose = mogroside V + UDP + H(+). It participates in secondary metabolite biosynthesis; terpenoid biosynthesis. Its function is as follows. UDP-glycosyltransferase involved in the biosynthesis of cucurbitacin and mogroside tetracyclic triterpene natural products (e.g. siamenoside I and mogrosides IV, V and VI). Cucurbitacins have cytotoxic properties and exhibit deterrent taste as a defense barrier against herbivores. Mogrosides are nonsugar highly oxygenated compounds used as high-intensity zero-calorie sweeteners; they also possess pharmacological properties such as regulating immunity, lowering blood sugar and lipid levels, protecting the liver, and acting as antioxidants and antitumor agents. Catalyzes the branched glucosylations of mogroside II-E, mogroside III and mogroside IV. This Siraitia grosvenorii (Monk's fruit) protein is Mogroside IIIx synthase.